Reading from the N-terminus, the 466-residue chain is SVGFKAGVKDYKLTYYTPDYETKDTDILAAFRVTPQPGVPPEEAGAAVAAESSTGTWTTVWTDGLTSLDRYKGRCYHIEPIAGEENQFIAYVAYPLDLFEEGSVTNMFTSIVGNVFGFKALRALRLEDLRIPPAYSKTFQGPPHGIQVERDKLNKYGRPLLGCTIKPKLGLSAKNYGRAVYECLRGGLDFTKDDENVNSQPFMRWRDRFLFCAEAIYKAQAETGEIKGHYLNATAGTCEEMIKRAVFARELGAPIIMHDYLTGGFTANTSLAHYCRDNGLLLHIHRAMHAVIDRQKNHGMHFRVLAKALRLSGGDHIHAGTVVGKLEGEREITLGFVDLLRDDFVEKDRSRGIFFTQDWVSLPGVLPVASGGIHVWHMPALTEIFGDDSVLQFGGGTLGHPWGNAPGAVANRVALEACVQARNEGRDLAREGNEIIRKASKWSPELAAACEVWKEIKFEFPAVDTL.

Lys-5 is modified (N6,N6,N6-trimethyllysine). Substrate contacts are provided by Asn-114 and Thr-164. The active-site Proton acceptor is the Lys-166. Lys-168 is a binding site for substrate. Residues Lys-192, Asp-194, and Glu-195 each contribute to the Mg(2+) site. Residue Lys-192 is modified to N6-carboxylysine. Residue His-285 is the Proton acceptor of the active site. Substrate-binding residues include Arg-286, His-318, and Ser-370.

The protein belongs to the RuBisCO large chain family. Type I subfamily. In terms of assembly, heterohexadecamer of 8 large chains and 8 small chains; disulfide-linked. The disulfide link is formed within the large subunit homodimers. Requires Mg(2+) as cofactor. In terms of processing, the disulfide bond which can form in the large chain dimeric partners within the hexadecamer appears to be associated with oxidative stress and protein turnover.

Its subcellular location is the plastid. It is found in the chloroplast. It carries out the reaction 2 (2R)-3-phosphoglycerate + 2 H(+) = D-ribulose 1,5-bisphosphate + CO2 + H2O. The enzyme catalyses D-ribulose 1,5-bisphosphate + O2 = 2-phosphoglycolate + (2R)-3-phosphoglycerate + 2 H(+). RuBisCO catalyzes two reactions: the carboxylation of D-ribulose 1,5-bisphosphate, the primary event in carbon dioxide fixation, as well as the oxidative fragmentation of the pentose substrate in the photorespiration process. Both reactions occur simultaneously and in competition at the same active site. The sequence is that of Ribulose bisphosphate carboxylase large chain from Moringa oleifera (Horseradish tree).